An 847-amino-acid polypeptide reads, in one-letter code: Capsid-associated protein AC83 (847 aa).

Residues 1–19 (MMSGVMLLMLAIFLIIAFT) form the signal peptide. The segment at 148–197 (CVPVPPCDNKSAGLYPMDERLLDTLVLNQHLDKDYSTNAHLYHPTFYLRC) adopts a C2HC BV-type zinc-finger fold. Asn-156 and Asn-211 each carry an N-linked (GlcNAc...) asparagine; by host glycan. Cystine bridges form between Cys-208-Cys-221 and Cys-261-Cys-274. Residues 224–282 (NELCENRPDGYILSYFPSNLLVNQFMQCVNGRHVVGECPANKIFDRNLMSCVEAHPCAF) form the Chitin-binding type-2 domain. Residues Asn-306, Asn-337, Asn-500, Asn-592, Asn-613, and Asn-639 are each glycosylated (N-linked (GlcNAc...) asparagine; by host). Positions 665–698 (DHWVVAPPTAPPPPPEPEPEPEPEPEPEPELPSP) are disordered. A compositionally biased stretch (acidic residues) spans 681–693 (PEPEPEPEPEPEP).

The protein resides in the virion. In terms of biological role, plays an essential role in nucleocapsid assembly. Essential for the establishment of efficient per os infection. The polypeptide is Capsid-associated protein AC83 (p95) (Autographa californica nuclear polyhedrosis virus (AcMNPV)).